The primary structure comprises 95 residues: Exodeoxyribonuclease 7 small subunit (95 aa).

This sequence belongs to the XseB family. As to quaternary structure, heterooligomer composed of large and small subunits.

The protein resides in the cytoplasm. The catalysed reaction is Exonucleolytic cleavage in either 5'- to 3'- or 3'- to 5'-direction to yield nucleoside 5'-phosphates.. Its function is as follows. Bidirectionally degrades single-stranded DNA into large acid-insoluble oligonucleotides, which are then degraded further into small acid-soluble oligonucleotides. The chain is Exodeoxyribonuclease 7 small subunit from Corynebacterium aurimucosum (strain ATCC 700975 / DSM 44827 / CIP 107346 / CN-1) (Corynebacterium nigricans).